The primary structure comprises 604 residues: DNA polymerase alpha subunit B (604 aa).

The interval 109–171 is disordered; that stretch reads ETLLNSYTTP…KYSSRSNRGE (63 aa). Positions 113–141 are enriched in polar residues; sequence NSYTTPSKGSQKRTITTPETPLTKRSVSA. A phosphothreonine mark is found at T129 and T132. A phosphoserine mark is found at S143, S149, S154, and S156. Low complexity predominate over residues 143–160; the sequence is SPHQLLSPSSFSPSATPP.

It belongs to the DNA polymerase alpha subunit B family. As to quaternary structure, component of the alpha DNA polymerase complex (also known as the alpha DNA polymerase-primase complex) consisting of four subunits: the catalytic subunit POLA1, the regulatory subunit POLA2, and the primase complex subunits PRIM1 and PRIM2 respectively. Within the complex, POLA1 directly interacts with PRIM2. Phosphorylated in a cell cycle-dependent manner, in G2/M phase.

Its subcellular location is the nucleus. Its function is as follows. Accessory subunit of the DNA polymerase alpha complex (also known as the alpha DNA polymerase-primase complex) which plays an essential role in the initiation of DNA synthesis. During the S phase of the cell cycle, the DNA polymerase alpha complex (composed of a catalytic subunit POLA1, an accessory subunit POLA2 and two primase subunits, the catalytic subunit PRIM1 and the regulatory subunit PRIM2) is recruited to DNA at the replicative forks via direct interactions with MCM10 and WDHD1. The primase subunit of the polymerase alpha complex initiates DNA synthesis by oligomerising short RNA primers on both leading and lagging strands. These primers are initially extended by the polymerase alpha catalytic subunit and subsequently transferred to polymerase delta and polymerase epsilon for processive synthesis on the lagging and leading strand, respectively. This Bos taurus (Bovine) protein is DNA polymerase alpha subunit B (POLA2).